The chain runs to 366 residues: Outer membrane protein IIIA (366 aa).

The signal sequence occupies residues 1–22; the sequence is MNIRMVLLASAAAFAASTPVLA.

It belongs to the alphaproteobacteria porin family. In terms of assembly, forms calcium-stabilized oligomers. In terms of processing, attached covalently to peptidoglycan.

It is found in the cell outer membrane. Its function is as follows. May act as an outer membrane pore. The protein is Outer membrane protein IIIA (ropA) of Rhizobium leguminosarum bv. viciae.